A 322-amino-acid polypeptide reads, in one-letter code: NADH-quinone oxidoreductase subunit H (322 aa).

A run of 8 helical transmembrane segments spans residues 12 to 32 (VGKA…MSFI), 79 to 99 (IFIL…AVVP), 111 to 131 (VGLL…LFAG), 151 to 171 (LSYE…TGSF), 183 to 203 (LWNV…GVAV), 234 to 254 (FFVG…TLFF), 262 to 282 (LPPF…FILL), and 301 to 321 (VCLP…LINV).

It belongs to the complex I subunit 1 family. As to quaternary structure, NDH-1 is composed of 14 different subunits. Subunits NuoA, H, J, K, L, M, N constitute the membrane sector of the complex.

It localises to the cell inner membrane. The catalysed reaction is a quinone + NADH + 5 H(+)(in) = a quinol + NAD(+) + 4 H(+)(out). In terms of biological role, NDH-1 shuttles electrons from NADH, via FMN and iron-sulfur (Fe-S) centers, to quinones in the respiratory chain. The immediate electron acceptor for the enzyme in this species is believed to be ubiquinone. Couples the redox reaction to proton translocation (for every two electrons transferred, four hydrogen ions are translocated across the cytoplasmic membrane), and thus conserves the redox energy in a proton gradient. This subunit may bind ubiquinone. In Aeromonas salmonicida (strain A449), this protein is NADH-quinone oxidoreductase subunit H.